The sequence spans 226 residues: 7-cyano-7-deazaguanine synthase (226 aa).

10–20 (LSGGLDSATAA) is a binding site for ATP. C191, C199, C202, and C205 together coordinate Zn(2+).

It belongs to the QueC family. Zn(2+) is required as a cofactor.

The catalysed reaction is 7-carboxy-7-deazaguanine + NH4(+) + ATP = 7-cyano-7-deazaguanine + ADP + phosphate + H2O + H(+). It functions in the pathway purine metabolism; 7-cyano-7-deazaguanine biosynthesis. In terms of biological role, catalyzes the ATP-dependent conversion of 7-carboxy-7-deazaguanine (CDG) to 7-cyano-7-deazaguanine (preQ(0)). The protein is 7-cyano-7-deazaguanine synthase of Synechococcus sp. (strain CC9311).